The following is a 469-amino-acid chain: Adenosylhomocysteinase (469 aa).

Residues threonine 63, aspartate 139, and glutamate 164 each coordinate substrate. 165 to 167 contributes to the NAD(+) binding site; it reads TTT. Substrate-binding residues include lysine 194 and aspartate 198. Residues asparagine 199, 228-233, glutamate 251, asparagine 300, 321-323, and asparagine 375 each bind NAD(+); these read GYGDVG and IGH.

This sequence belongs to the adenosylhomocysteinase family. NAD(+) is required as a cofactor.

It localises to the cytoplasm. The enzyme catalyses S-adenosyl-L-homocysteine + H2O = L-homocysteine + adenosine. It functions in the pathway amino-acid biosynthesis; L-homocysteine biosynthesis; L-homocysteine from S-adenosyl-L-homocysteine: step 1/1. May play a key role in the regulation of the intracellular concentration of adenosylhomocysteine. The protein is Adenosylhomocysteinase of Pseudomonas putida (strain ATCC 700007 / DSM 6899 / JCM 31910 / BCRC 17059 / LMG 24140 / F1).